Consider the following 751-residue polypeptide: Photosystem I P700 chlorophyll a apoprotein A1 (751 aa).

8 helical membrane passes run 72–95, 158–181, 197–221, 293–311, 348–371, 387–413, 435–457, and 532–550; these read IFSA…FHGA, LYCT…FHYH, MNHH…HVSM, TAHH…GHMY, WHAQ…QHMY, LSLF…IFMV, AIIS…LYIH, and FMVH…LILL. The [4Fe-4S] cluster site is built by Cys-574 and Cys-583. The next 2 helical transmembrane spans lie at 590–611 and 665–687; these read HVFL…HFSW and LSAY…MFLF. Position 676 (His-676) interacts with chlorophyll a'. Chlorophyll a is bound by residues Met-684 and Tyr-692. Trp-693 serves as a coordination point for phylloquinone. The chain crosses the membrane as a helical span at residues 725 to 745; sequence AVGVAHYLLGGIVTTWAFFLA.

Belongs to the PsaA/PsaB family. The PsaA/B heterodimer binds the P700 chlorophyll special pair and subsequent electron acceptors. PSI consists of a core antenna complex that captures photons, and an electron transfer chain that converts photonic excitation into a charge separation. The cyanobacterial PSI reaction center is composed of one copy each of PsaA,B,C,D,E,F,I,J,K,L,M and X, and forms trimeric complexes. Requires PSI electron transfer chain: 5 chlorophyll a, 1 chlorophyll a', 2 phylloquinones and 3 4Fe-4S clusters. PSI core antenna: 90 chlorophyll a, 22 carotenoids, 3 phospholipids and 1 galactolipid. P700 is a chlorophyll a/chlorophyll a' dimer, A0 is one or more chlorophyll a, A1 is one or both phylloquinones and FX is a shared 4Fe-4S iron-sulfur center. as cofactor.

Its subcellular location is the cellular thylakoid membrane. The enzyme catalyses reduced [plastocyanin] + hnu + oxidized [2Fe-2S]-[ferredoxin] = oxidized [plastocyanin] + reduced [2Fe-2S]-[ferredoxin]. In terms of biological role, psaA and PsaB bind P700, the primary electron donor of photosystem I (PSI), as well as the electron acceptors A0, A1 and FX. PSI is a plastocyanin/cytochrome c6-ferredoxin oxidoreductase, converting photonic excitation into a charge separation, which transfers an electron from the donor P700 chlorophyll pair to the spectroscopically characterized acceptors A0, A1, FX, FA and FB in turn. Oxidized P700 is reduced on the lumenal side of the thylakoid membrane by plastocyanin or cytochrome c6. This chain is Photosystem I P700 chlorophyll a apoprotein A1, found in Synechocystis sp. (strain ATCC 27184 / PCC 6803 / Kazusa).